A 663-amino-acid chain; its full sequence is Alpha-1,4-glucan:maltose-1-phosphate maltosyltransferase (663 aa).

A disordered region spans residues 238 to 266; it reads IGETNRKGPDDAPEAGPDDPGSPWAIGGF. Lysine 244, glutamine 309, and aspartate 344 together coordinate alpha-maltose 1-phosphate. The Nucleophile role is filled by aspartate 380. Asparagine 381 serves as a coordination point for alpha-maltose 1-phosphate. The active-site Proton donor is the glutamate 409. 521–522 provides a ligand contact to alpha-maltose 1-phosphate; the sequence is KY.

This sequence belongs to the glycosyl hydrolase 13 family. GlgE subfamily. As to quaternary structure, homodimer.

The enzyme catalyses alpha-maltose 1-phosphate + [(1-&gt;4)-alpha-D-glucosyl](n) = [(1-&gt;4)-alpha-D-glucosyl](n+2) + phosphate. Its function is as follows. Maltosyltransferase that uses maltose 1-phosphate (M1P) as the sugar donor to elongate linear or branched alpha-(1-&gt;4)-glucans. Is involved in a branched alpha-glucan biosynthetic pathway from trehalose, together with TreS, Mak and GlgB. This is Alpha-1,4-glucan:maltose-1-phosphate maltosyltransferase from Salinibacter ruber (strain DSM 13855 / M31).